Reading from the N-terminus, the 178-residue chain is Protein FAM89A (178 aa).

The protein belongs to the FAM89 family.

In Bos taurus (Bovine), this protein is Protein FAM89A (FAM89A).